A 336-amino-acid polypeptide reads, in one-letter code: Gastrula zinc finger protein XlCGF57.1 (336 aa).

11 consecutive C2H2-type zinc fingers follow at residues 6–28, 34–56, 62–84, 90–112, 118–140, 146–168, 174–196, 202–224, 230–252, 258–280, and 286–308; these read YTCT…MKIH, FICT…MKTH, FTCT…LTIH, FSCT…MKTH, FTCT…MKTH, FTCT…LKIH, FTCT…MKIH, FSCT…LTMH, FTCT…TKIH, and FSCT…LKIH.

Belongs to the krueppel C2H2-type zinc-finger protein family.

It localises to the nucleus. In terms of biological role, may be involved in transcriptional regulation. The chain is Gastrula zinc finger protein XlCGF57.1 from Xenopus laevis (African clawed frog).